We begin with the raw amino-acid sequence, 89 residues long: Putative sodium channel toxin Ts30 (89 aa).

A signal peptide spans 1 to 17; that stretch reads MFKLAIILALLFFGARA. The LCN-type CS-alpha/beta domain maps to 21 to 85; the sequence is RDGYPILSDG…FGDSGTPECH (65 aa). 4 disulfides stabilise this stretch: Cys31–Cys84, Cys35–Cys59, Cys44–Cys64, and Cys48–Cys66.

In terms of tissue distribution, expressed by the venom gland.

The protein resides in the secreted. This chain is Putative sodium channel toxin Ts30, found in Tityus serrulatus (Brazilian scorpion).